Reading from the N-terminus, the 168-residue chain is G/U mismatch-specific DNA glycosylase (168 aa).

Belongs to the uracil-DNA glycosylase (UDG) superfamily. TDG/mug family. As to quaternary structure, binds DNA as a monomer.

It localises to the cytoplasm. The enzyme catalyses Specifically hydrolyzes mismatched double-stranded DNA and polynucleotides, releasing free uracil.. Functionally, excises ethenocytosine and uracil, which can arise by alkylation or deamination of cytosine, respectively, from the corresponding mispairs with guanine in ds-DNA. It is capable of hydrolyzing the carbon-nitrogen bond between the sugar-phosphate backbone of the DNA and the mispaired base. The complementary strand guanine functions in substrate recognition. Required for DNA damage lesion repair in stationary-phase cells. The protein is G/U mismatch-specific DNA glycosylase of Enterobacter sp. (strain 638).